A 217-amino-acid polypeptide reads, in one-letter code: Probable transaldolase (217 aa).

Lys-83 acts as the Schiff-base intermediate with substrate in catalysis.

Belongs to the transaldolase family. Type 3B subfamily.

The protein resides in the cytoplasm. The catalysed reaction is D-sedoheptulose 7-phosphate + D-glyceraldehyde 3-phosphate = D-erythrose 4-phosphate + beta-D-fructose 6-phosphate. The protein operates within carbohydrate degradation; pentose phosphate pathway; D-glyceraldehyde 3-phosphate and beta-D-fructose 6-phosphate from D-ribose 5-phosphate and D-xylulose 5-phosphate (non-oxidative stage): step 2/3. Transaldolase is important for the balance of metabolites in the pentose-phosphate pathway. In Caldicellulosiruptor saccharolyticus (strain ATCC 43494 / DSM 8903 / Tp8T 6331), this protein is Probable transaldolase.